Consider the following 224-residue polypeptide: Mannose-specific lectin 3 (224 aa).

Bulb-type lectin domains are found at residues 2-111 and 117-222; these read NNVL…PAAA and RNVL…VWST. 2 cysteine pairs are disulfide-bonded: Cys30/Cys52 and Cys145/Cys170.

In terms of assembly, heterotetramer of 2 domain 1 and 2 domain 2 chains arranged as a dimer of domain 1/domain 2 heterodimers.

Functionally, mannose-specific lectin. Has weak agglutinating activity towards trypsin-treated erythrocytes from rabbit but not from human. In Crocus vernus (Dutch crocus), this protein is Mannose-specific lectin 3.